Here is a 102-residue protein sequence, read N- to C-terminus: Small ribosomal subunit protein uS10 (102 aa).

The interval 33 to 59 is disordered; that stretch reads RMSGPIPLPTKRIRITTRKSPDGEGSA.

The protein belongs to the universal ribosomal protein uS10 family. Part of the 30S ribosomal subunit.

Involved in the binding of tRNA to the ribosomes. In Pyrococcus furiosus (strain ATCC 43587 / DSM 3638 / JCM 8422 / Vc1), this protein is Small ribosomal subunit protein uS10.